The chain runs to 315 residues: L-lactate dehydrogenase (315 aa).

NAD(+) contacts are provided by residues Val17, Asp38, Lys43, Tyr69, and 83-84 (GA). Positions 86 and 92 each coordinate substrate. Residues Ser105, 122-124 (ATN), and Ser147 each bind NAD(+). Position 124–127 (124–127 (NPVD)) interacts with substrate. A substrate-binding site is contributed by 152–155 (DTAR). Positions 157 and 172 each coordinate beta-D-fructose 1,6-bisphosphate. His179 serves as the catalytic Proton acceptor. Tyr223 carries the post-translational modification Phosphotyrosine. Substrate is bound at residue Thr232.

This sequence belongs to the LDH/MDH superfamily. LDH family. As to quaternary structure, homotetramer.

The protein resides in the cytoplasm. It carries out the reaction (S)-lactate + NAD(+) = pyruvate + NADH + H(+). It functions in the pathway fermentation; pyruvate fermentation to lactate; (S)-lactate from pyruvate: step 1/1. Allosterically activated by fructose 1,6-bisphosphate (FBP). Its function is as follows. Catalyzes the conversion of lactate to pyruvate. In Macrococcus caseolyticus (strain JCSC5402) (Macrococcoides caseolyticum), this protein is L-lactate dehydrogenase.